The primary structure comprises 315 residues: tRNA dimethylallyltransferase (315 aa).

14–21 (GPTASGKT) provides a ligand contact to ATP. Residue 16–21 (TASGKT) participates in substrate binding. Interaction with substrate tRNA stretches follow at residues 39–42 (DSAL), 163–167 (QRIQR), and 248–253 (RCVGYR).

It belongs to the IPP transferase family. As to quaternary structure, monomer. Mg(2+) serves as cofactor.

It carries out the reaction adenosine(37) in tRNA + dimethylallyl diphosphate = N(6)-dimethylallyladenosine(37) in tRNA + diphosphate. In terms of biological role, catalyzes the transfer of a dimethylallyl group onto the adenine at position 37 in tRNAs that read codons beginning with uridine, leading to the formation of N6-(dimethylallyl)adenosine (i(6)A). The protein is tRNA dimethylallyltransferase of Paraburkholderia phytofirmans (strain DSM 17436 / LMG 22146 / PsJN) (Burkholderia phytofirmans).